The primary structure comprises 139 residues: Cystatin-11 (139 aa).

A signal peptide spans 1–28 (MMARLWKTTWFLLAILVALVAFSYQVKR). Disulfide bonds link C94–C102 and C115–C135. N134 carries N-linked (GlcNAc...) asparagine glycosylation.

Belongs to the cystatin family.

It is found in the secreted. Has antibacterial activity against the Gram-negative bacteria E.coli. May play a role in sperm maturation and fertilization. The polypeptide is Cystatin-11 (Cst11) (Rattus norvegicus (Rat)).